We begin with the raw amino-acid sequence, 316 residues long: Pantothenate kinase (316 aa).

ATP is bound at residue 95 to 102 (GSVAVGKS).

It belongs to the prokaryotic pantothenate kinase family.

It localises to the cytoplasm. It carries out the reaction (R)-pantothenate + ATP = (R)-4'-phosphopantothenate + ADP + H(+). The protein operates within cofactor biosynthesis; coenzyme A biosynthesis; CoA from (R)-pantothenate: step 1/5. In Shewanella halifaxensis (strain HAW-EB4), this protein is Pantothenate kinase.